The chain runs to 261 residues: Matrix metalloproteinase-26 (261 aa).

An N-terminal signal peptide occupies residues 1-17; the sequence is MQLVILRVTIFLPWCFA. A propeptide spanning residues 18–89 is cleaved from the precursor; the sequence is VPVPPAADHK…PHCGVPDGSD (72 aa). N-linked (GlcNAc...) asparagine glycosylation occurs at asparagine 64. The Cysteine switch signature appears at 80–87; that stretch reads PHCGVPDG. Zn(2+) is bound by residues cysteine 82 and histidine 208. Glutamate 209 is an active-site residue. Positions 212 and 218 each coordinate Zn(2+). A glycan (N-linked (GlcNAc...) asparagine) is linked at asparagine 221.

The protein belongs to the peptidase M10A family. Zn(2+) serves as cofactor. It depends on Ca(2+) as a cofactor. Expressed specifically in uterus and placenta. Is also widely expressed in malignant tumors from different sources as well as in diverse tumor cell lines.

Its subcellular location is the secreted. It is found in the extracellular space. The protein resides in the extracellular matrix. Its function is as follows. May hydrolyze collagen type IV, fibronectin, fibrinogen, beta-casein, type I gelatin and alpha-1 proteinase inhibitor. Is also able to activate progelatinase B. The polypeptide is Matrix metalloproteinase-26 (MMP26) (Homo sapiens (Human)).